We begin with the raw amino-acid sequence, 481 residues long: MSHSLTSVFQKIDSLKPQFFSRLTKAIQIPAVSSDESLRSKVFDKAKFISEQLSQSGFHDIKMVDLGIQPPPISTPNLSLPPVILSRFGSDPSKKTVLVYGHYDVQPAQLEDGWDTEPFKLVIDEAKGIMKGRGVTDDTGPLLSWINVVDAFKASGQEFPVNLVTCFEGMEESGSLKLDELIKKEANGYFKGVDAVCISDNYWLGTKKPVLTYGLRGCNYYQTIIEGPSADLHSGIFGGVVAEPMIDLMQVLGSLVDSKGKILIDGIDEMVAPLTEKEKALYKDIEFSVEELNAATGSKTSLYDKKEDILMHRWRYPSLSIHGVEGAFSAQGAKTVIPAKVFGKFSIRTVPDMDSEKLTSLVQKHCDAKFKSLNSPNKCRTELIHDGAYWVSDPFNAQFTAAKKATKLVYGVDPDFTREGGSIPITLTFQDALNTSVLLLPMGRGDDGAHSINEKLDISNFVGGMKTMAAYLQYYSESPEN.

Residue histidine 102 coordinates Zn(2+). The active site involves aspartate 104. A Zn(2+)-binding site is contributed by aspartate 137. Glutamate 171 (proton acceptor) is an active-site residue. 3 residues coordinate Zn(2+): glutamate 172, aspartate 200, and histidine 450. Serine 451 carries the post-translational modification Phosphoserine.

This sequence belongs to the peptidase M20A family. In terms of assembly, homodimer. Component of the GSH degradosomal complex composed of at least DUG1, DUG2 and DUG3. The cofactor is Zn(2+). Requires Mn(2+) as cofactor.

It localises to the cytoplasm. It is found in the mitochondrion. Its function is as follows. Catalytic component of the GSH degradosomal complex involved in the degradation of glutathione (GSH) and other peptides containing a gamma-glu-X bond. Also functions in a DUG2-DUG3-independent manner as a dipeptidase with high specificity for Cys-Gly and no activity toward tri- or tetrapeptides. This chain is Cys-Gly metallodipeptidase DUG1 (DUG1), found in Saccharomyces cerevisiae (strain ATCC 204508 / S288c) (Baker's yeast).